A 430-amino-acid polypeptide reads, in one-letter code: Maintenance of mitochondrial morphology protein 1 (430 aa).

Topologically, residues 1 to 70 are lumenal; that stretch reads MSQGLIETTT…NGNTWSFTQG (70 aa). Residues 71-91 traverse the membrane as a helical segment; that stretch reads LVIGQISVIFIIIVFVKFFVF. Topologically, residues 92–430 are cytoplasmic; the sequence is ADSSSHIPTK…TPGEFVNSNI (339 aa). The SMP-LTD domain maps to 159-387; that stretch reads ASESLDWFNV…EPRFQVVRLP (229 aa). The tract at residues 305–326 is disordered; it reads GYSKENGSADSASDNDEDEDDG. Acidic residues predominate over residues 317-326; the sequence is SDNDEDEDDG.

The protein belongs to the MMM1 family. Homodimer. Component of the ER-mitochondria encounter structure (ERMES) or MDM complex, composed of MMM1, MDM10, MDM12 and MDM34. An MMM1 homodimer associates with one molecule of MDM12 on each side in a pairwise head-to-tail manner, and the SMP-LTD domains of MMM1 and MDM12 generate a continuous hydrophobic tunnel for phospholipid trafficking.

It localises to the endoplasmic reticulum membrane. In terms of biological role, component of the ERMES/MDM complex, which serves as a molecular tether to connect the endoplasmic reticulum (ER) and mitochondria. Components of this complex are involved in the control of mitochondrial shape and protein biogenesis, and function in nonvesicular lipid trafficking between the ER and mitochondria. The MDM12-MMM1 subcomplex functions in the major beta-barrel assembly pathway that is responsible for biogenesis of all outer membrane beta-barrel proteins, and acts in a late step after the SAM complex. The MDM10-MDM12-MMM1 subcomplex further acts in the TOM40-specific pathway after the action of the MDM12-MMM1 complex. Essential for establishing and maintaining the structure of mitochondria and maintenance of mtDNA nucleoids. The protein is Maintenance of mitochondrial morphology protein 1 of Candida dubliniensis (strain CD36 / ATCC MYA-646 / CBS 7987 / NCPF 3949 / NRRL Y-17841) (Yeast).